Reading from the N-terminus, the 459-residue chain is Asparagine--tRNA ligase (459 aa).

It belongs to the class-II aminoacyl-tRNA synthetase family. As to quaternary structure, homodimer.

The protein resides in the cytoplasm. It carries out the reaction tRNA(Asn) + L-asparagine + ATP = L-asparaginyl-tRNA(Asn) + AMP + diphosphate + H(+). The chain is Asparagine--tRNA ligase from Pelobacter propionicus (strain DSM 2379 / NBRC 103807 / OttBd1).